The following is a 227-amino-acid chain: Putative ankyrin repeat protein L45 (227 aa).

ANK repeat units follow at residues 38-66, 78-107, 108-137, 139-167, 168-197, and 199-227; these read FETNIIEYVVENNLLDILRHIIFLKNINH, CLEESLNASCKNGKLEIVKLLVDLGANIFH, NENCAMMLASEYGHIEIVEYLVSKGSDVRA, NDYAVIYASKNGHLEIVKYLVSQGCDVRS, CDSYAVRLASEYGHLEIVKFLVKKGANYRA, and NHHAVIEASKNKHYEIVEFLMNYSTGITK.

The sequence is that of Putative ankyrin repeat protein L45 from Acanthamoeba polyphaga mimivirus (APMV).